We begin with the raw amino-acid sequence, 447 residues long: Argininosuccinate synthase (447 aa).

ATP is bound by residues 17–25 (AFSGGLDTS) and A43. An L-citrulline-binding site is contributed by Y99. ATP-binding residues include G129 and T131. L-aspartate contacts are provided by T131, N135, and D136. N135 is an L-citrulline binding site. Residue D136 coordinates ATP. L-citrulline contacts are provided by R139 and S192. D194 contributes to the ATP binding site. Positions 201, 203, and 280 each coordinate L-citrulline.

It belongs to the argininosuccinate synthase family. Type 2 subfamily. In terms of assembly, homotetramer.

It localises to the cytoplasm. The enzyme catalyses L-citrulline + L-aspartate + ATP = 2-(N(omega)-L-arginino)succinate + AMP + diphosphate + H(+). Its pathway is amino-acid biosynthesis; L-arginine biosynthesis; L-arginine from L-ornithine and carbamoyl phosphate: step 2/3. The protein is Argininosuccinate synthase (argG) of Salmonella typhi.